We begin with the raw amino-acid sequence, 1171 residues long: ATP-dependent helicase/deoxyribonuclease subunit B (1171 aa).

The UvrD-like helicase ATP-binding domain maps to Met-1–Arg-301. Position 8–15 (Gly-8–Ser-15) interacts with ATP. In terms of domain architecture, UvrD-like helicase C-terminal spans Met-281–Asp-587. Cys-805, Cys-1129, Cys-1132, and Cys-1138 together coordinate [4Fe-4S] cluster.

This sequence belongs to the helicase family. AddB/RexB type 1 subfamily. In terms of assembly, heterodimer of AddA and AddB. It depends on Mg(2+) as a cofactor. The cofactor is [4Fe-4S] cluster.

The heterodimer acts as both an ATP-dependent DNA helicase and an ATP-dependent, dual-direction single-stranded exonuclease. Recognizes the chi site generating a DNA molecule suitable for the initiation of homologous recombination. The AddB subunit has 5' -&gt; 3' nuclease activity but not helicase activity. In Bacillus mycoides (strain KBAB4) (Bacillus weihenstephanensis), this protein is ATP-dependent helicase/deoxyribonuclease subunit B.